Reading from the N-terminus, the 220-residue chain is Protein-L-isoaspartate O-methyltransferase (220 aa).

Residue serine 68 is part of the active site.

The protein belongs to the methyltransferase superfamily. L-isoaspartyl/D-aspartyl protein methyltransferase family.

The protein localises to the cytoplasm. It catalyses the reaction [protein]-L-isoaspartate + S-adenosyl-L-methionine = [protein]-L-isoaspartate alpha-methyl ester + S-adenosyl-L-homocysteine. Its function is as follows. Catalyzes the methyl esterification of L-isoaspartyl residues in peptides and proteins that result from spontaneous decomposition of normal L-aspartyl and L-asparaginyl residues. It plays a role in the repair and/or degradation of damaged proteins. This Dictyoglomus thermophilum (strain ATCC 35947 / DSM 3960 / H-6-12) protein is Protein-L-isoaspartate O-methyltransferase.